We begin with the raw amino-acid sequence, 409 residues long: Magnesium-protoporphyrin IX monomethyl ester [oxidative] cyclase, chloroplastic (409 aa).

2 disordered regions span residues 1-23 and 36-60; these read MAAE…SNPS and RMSA…TKKE. The transit peptide at 1–36 directs the protein to the chloroplast; that stretch reads MAAEMALVKPISKFSSPKLSNPSKFLSGRRFSTVIR. Residues 13–23 are compositionally biased toward polar residues; that stretch reads KFSSPKLSNPS.

Belongs to the AcsF family. As to quaternary structure, part of the FLU-containing chloroplast membrane complex composed of FLU, CRD1, PORB, PORC, CHLP and HEMA1. Interacts with YCF54 in chloroplasts. Requires Fe cation as cofactor.

The protein resides in the plastid. It is found in the chloroplast inner membrane. The protein localises to the chloroplast thylakoid membrane. It catalyses the reaction Mg-protoporphyrin IX 13-monomethyl ester + 3 NADPH + 3 O2 + 2 H(+) = 3,8-divinyl protochlorophyllide a + 3 NADP(+) + 5 H2O. Its pathway is porphyrin-containing compound metabolism; chlorophyll biosynthesis. Catalytic component of the MgProto monomethylester (MgProtoME) cyclase complex that catalyzes the formation of the isocyclic ring in chlorophyll biosynthesis. Mediates the cyclase reaction, which results in the formation of divinylprotochlorophyllide (Pchlide) characteristic of all chlorophylls from magnesium-protoporphyrin IX 13-monomethyl ester (MgPMME). This is Magnesium-protoporphyrin IX monomethyl ester [oxidative] cyclase, chloroplastic from Arabidopsis thaliana (Mouse-ear cress).